A 160-amino-acid chain; its full sequence is Putative UPF0479 protein YLR466C-A (160 aa).

Transmembrane regions (helical) follow at residues 39–59 (IVFCLPFFPALFLVPVQKVLQ) and 136–156 (VPMIWLDVFQVFFVFLVISQH).

It belongs to the UPF0479 family.

It is found in the membrane. The protein is Putative UPF0479 protein YLR466C-A of Saccharomyces cerevisiae (strain ATCC 204508 / S288c) (Baker's yeast).